The primary structure comprises 286 residues: ATP synthase gamma chain (286 aa).

The protein belongs to the ATPase gamma chain family. In terms of assembly, F-type ATPases have 2 components, CF(1) - the catalytic core - and CF(0) - the membrane proton channel. CF(1) has five subunits: alpha(3), beta(3), gamma(1), delta(1), epsilon(1). CF(0) has three main subunits: a, b and c.

It localises to the cell inner membrane. Its function is as follows. Produces ATP from ADP in the presence of a proton gradient across the membrane. The gamma chain is believed to be important in regulating ATPase activity and the flow of protons through the CF(0) complex. The protein is ATP synthase gamma chain of Pseudoalteromonas atlantica (strain T6c / ATCC BAA-1087).